The chain runs to 76 residues: Acyl carrier protein (76 aa).

The Carrier domain occupies 1–76; it reads MATFDDVKDV…AAVDYIDNNQ (76 aa). Ser-36 is subject to O-(pantetheine 4'-phosphoryl)serine.

It belongs to the acyl carrier protein (ACP) family. 4'-phosphopantetheine is transferred from CoA to a specific serine of apo-ACP by AcpS. This modification is essential for activity because fatty acids are bound in thioester linkage to the sulfhydryl of the prosthetic group.

Its subcellular location is the cytoplasm. It functions in the pathway lipid metabolism; fatty acid biosynthesis. Carrier of the growing fatty acid chain in fatty acid biosynthesis. The polypeptide is Acyl carrier protein (Deinococcus radiodurans (strain ATCC 13939 / DSM 20539 / JCM 16871 / CCUG 27074 / LMG 4051 / NBRC 15346 / NCIMB 9279 / VKM B-1422 / R1)).